The primary structure comprises 295 residues: UDP-N-acetylenolpyruvoylglucosamine reductase (295 aa).

One can recognise an FAD-binding PCMH-type domain in the interval 23 to 188 (KVGGPADFLA…ISAKFALKPG (166 aa)). Arg167 is an active-site residue. Residue Ser217 is the Proton donor of the active site. Glu287 is an active-site residue.

It belongs to the MurB family. It depends on FAD as a cofactor.

Its subcellular location is the cytoplasm. The catalysed reaction is UDP-N-acetyl-alpha-D-muramate + NADP(+) = UDP-N-acetyl-3-O-(1-carboxyvinyl)-alpha-D-glucosamine + NADPH + H(+). It participates in cell wall biogenesis; peptidoglycan biosynthesis. Its function is as follows. Cell wall formation. This chain is UDP-N-acetylenolpyruvoylglucosamine reductase, found in Streptococcus pyogenes serotype M49 (strain NZ131).